The chain runs to 513 residues: MRSRCTVSAVGLLSLCLVVSASLETITPSAFDGYPDEPCTINITIRNSRLILSWELENKSGPPANYTLWYTVMSKDENLTKVKNCSDTTKSSCDVTDKWLEGMESYVVAIVIVHRGDLTVCRCSDYIVPANAPLEPPEFEIVGFTDHINVTMEFPPVTSKIIQEKMKTTPFVIKEQIGDSVRKKHEPKVNNVTGNFTFVLRDLLPKTNYCVSLYFDDDPAIKSPLKCIVLQPGQESGLSESAIVGITTSCLVVMVFVSTIVMLKRIGYICLKDNLPNVLNFRHFLTWIIPERSPSEAIDRLEIIPTNKKKRLWNYDYEDGSDSDEEVPTASVTGYTMHGLTGKPLQQTSDTSASPEDPLHEEDSGAEESDEAGAGAGAEPELPTEAGAGPSEDPTGPYERRKSVLEDSFPREDNSSMDEPGDNIIFNVNLNSVFLRVLHDEDASETLSLEEDTILLDEGPQRTESDLRIAGGDRTQPPLPSLPSQDLWTEDGSSEKSDTSDSDADVGDGYIMR.

The N-terminal stretch at 1-21 (MRSRCTVSAVGLLSLCLVVSA) is a signal peptide. Over 22–242 (SLETITPSAF…GQESGLSESA (221 aa)) the chain is Extracellular. 2 cysteine pairs are disulfide-bonded: cysteine 39/cysteine 123 and cysteine 85/cysteine 93. 5 N-linked (GlcNAc...) asparagine glycosylation sites follow: asparagine 42, asparagine 58, asparagine 65, asparagine 78, and asparagine 84. Residues asparagine 149, asparagine 191, and asparagine 195 are each glycosylated (N-linked (GlcNAc...) asparagine). Cysteine 210 and cysteine 227 form a disulfide bridge. A helical membrane pass occupies residues 243–263 (IVGITTSCLVVMVFVSTIVML). At 264–513 (KRIGYICLKD…ADVGDGYIMR (250 aa)) the chain is on the cytoplasmic side. Residues 334–402 (GYTMHGLTGK…DPTGPYERRK (69 aa)) form a disordered region. Phosphotyrosine is present on tyrosine 335. A compositionally biased stretch (polar residues) spans 344 to 354 (PLQQTSDTSAS). The segment covering 377-389 (GAEPELPTEAGAG) has biased composition (low complexity). Serine 403 bears the Phosphoserine mark. Residues 421-444 (GDNIIFNVNLNSVFLRVLHDEDAS) are mediates interaction with STAT2 (and required for the recruitment of USP18). A phosphoserine mark is found at serine 448 and serine 465. Residues 458 to 513 (EGPQRTESDLRIAGGDRTQPPLPSLPSQDLWTEDGSSEKSDTSDSDADVGDGYIMR) form a disordered region. Tyrosine 510 bears the Phosphotyrosine mark.

The protein belongs to the type II cytokine receptor family. Heterodimer with IFNAR1; forming the receptor for type I interferon. Interacts with the transcriptional factors STAT1 and STAT2. Interacts with JAK1. Interacts with USP18; indirectly via STAT2, it negatively regulates the assembly of the ternary interferon-IFNAR1-IFNAR2 complex and therefore type I interferon signaling. Post-translationally, phosphorylated on tyrosine residues upon interferon binding. Phosphorylation at Tyr-335 or Tyr-510 are sufficient to mediate interferon dependent activation of STAT1, STAT2 and STAT3 leading to antiproliferative effects on many different cell types. In terms of tissue distribution, widely expressed. Detected in liver, testis, kidney, salivary gland, thymus, brain, lung and placenta. Isoform 1, isoform 2 and isoform 3 are expressed in brain.

It is found in the cell membrane. The protein resides in the secreted. Together with IFNAR1, forms the heterodimeric receptor for type I interferons (including interferons alpha, beta, epsilon, omega and kappa). Type I interferon binding activates the JAK-STAT signaling cascade, resulting in transcriptional activation or repression of interferon-regulated genes that encode the effectors of the interferon response. Mechanistically, type I interferon-binding brings the IFNAR1 and IFNAR2 subunits into close proximity with one another, driving their associated Janus kinases (JAKs) (TYK2 bound to IFNAR1 and JAK1 bound to IFNAR2) to cross-phosphorylate one another. The activated kinases phosphorylate specific tyrosine residues on the intracellular domains of IFNAR1 and IFNAR2, forming docking sites for the STAT transcription factors (STAT1, STAT2 and STAT). STAT proteins are then phosphorylated by the JAKs, promoting their translocation into the nucleus to regulate expression of interferon-regulated genes. Its function is as follows. May be potent inhibitors of type I IFN receptor activity. The chain is Interferon alpha/beta receptor 2 (Ifnar2) from Mus musculus (Mouse).